A 444-amino-acid chain; its full sequence is Xaa-Pro dipeptidase (444 aa).

5 residues coordinate Mn(2+): Asp-247, Asp-258, His-340, Glu-385, and Glu-424.

This sequence belongs to the peptidase M24B family. Bacterial-type prolidase subfamily. It depends on Mn(2+) as a cofactor.

The enzyme catalyses Xaa-L-Pro dipeptide + H2O = an L-alpha-amino acid + L-proline. Its function is as follows. Splits dipeptides with a prolyl residue in the C-terminal position. This Proteus mirabilis (strain HI4320) protein is Xaa-Pro dipeptidase.